A 35-amino-acid polypeptide reads, in one-letter code: Putative gene 58 protein (35 aa).

In Bacillus phage SP01 (Bacteriophage SP01), this protein is Putative gene 58 protein (58).